Consider the following 245-residue polypeptide: MNNKFDALKDDDSGDHDQNEENSTQKDGEKEKTERDKNQSSSKRKAVVPGPAEHPLQYNYTFWYSRRTPGRPTSSQSYEQNIKQIGTFASVEQFWRFYSHMVRPGDLTGHSDFHLFKEGIKPMWEDDANKNGGKWIIRLRKGLASRCWENLILAMLGEQFMVGEEICGAVVSVRFQEDIISIWNKTASDQATTARIRDTLRRVLNLPPNTIMEYKTHTDSIKMPGRLGPQRLLFQNLWKPRLNVP.

The segment covering 1–38 has biased composition (basic and acidic residues); the sequence is MNNKFDALKDDDSGDHDQNEENSTQKDGEKEKTERDKN. Residues 1 to 52 form a disordered region; sequence MNNKFDALKDDDSGDHDQNEENSTQKDGEKEKTERDKNQSSSKRKAVVPGPA. At Ser13 the chain carries Phosphoserine. Residues 54-57 form an EIF4EBP1/2/3 binding region; it reads HPLQ. Residue 78-79 participates in mRNA binding; sequence YE. The segment at 95-99 is EIF4EBP1/2/3 binding; it reads WRFYS. MRNA contacts are provided by residues His110 and 124-125; that span reads WE. Lys134 bears the N6-acetyllysine; alternate mark. Residue Lys134 forms a Glycyl lysine isopeptide (Lys-Gly) (interchain with G-Cter in ISG15); alternate linkage. The EIF4EBP1/2/3 binding stretch occupies residues 150–157; the sequence is NLILAMLG. MRNA-binding positions include 174–179 and 222–224; these read RFQEDI and KMP. Residue Lys222 forms a Glycyl lysine isopeptide (Lys-Gly) (interchain with G-Cter in ISG15) linkage.

Belongs to the eukaryotic initiation factor 4E family. Interacts with EIF4EBP1, EIF4EBP2 and EIF4EBP3. Does not interact with eIF4G (EIF4G1, EIF4G2 or EIF4G3). Component of the 4EHP-GYF2 complex, at least composed of EIF4E2, GIGYF2 and ZNF598. Interacts with GIGYF2 (via the 4EHP-binding motif); the interaction is direct. Interacts with EIF4ENIF1/4E-T (via YXXXXLphi motif); increasing affinity for the 7-methylguanosine-containing mRNA cap. Post-translationally, ubiquitinated by ARIH1. The consequences of ubiquitination are however unclear: according to a report, EIF4E2 ubiquitination leads to promote EIF4E2 cap-binding and protein translation arrest. According to another report ubiquitination leads to its subsequent degradation. ISGylation enhances its cap structure-binding activity and translation-inhibition activity.

Its subcellular location is the cytoplasm. It is found in the P-body. Recognizes and binds the 7-methylguanosine-containing mRNA cap during an early step in the initiation. Acts as a repressor of translation initiation. In contrast to EIF4E, it is unable to bind eIF4G (EIF4G1, EIF4G2 or EIF4G3), suggesting that it acts by competing with EIF4E and block assembly of eIF4F at the cap. In P-bodies, component of a complex that promotes miRNA-mediated translational repression. Involved in virus-induced host response by mediating miRNA MIR34A-induced translational silencing which controls IFNB1 production by a negative feedback mechanism. Its function is as follows. Component of the 4EHP-GYF2 complex, a multiprotein complex that acts as a repressor of translation initiation. In association with GIGYF2, assists ribosome-associated quality control (RQC) by sequestering the mRNA cap, blocking ribosome initiation and decreasing the translational load on problematic messages. Part of a pathway that works in parallel to RQC-mediated degradation of the stalled nascent polypeptide. GIGYF2 and EIF4E2 work downstream and independently of ZNF598, which seems to work as a scaffold that can recruit them to faulty mRNA even if alternative recruitment mechanisms may exist. Functionally, (Microbial infection) Upon SARS coronavirus-2/SARS-CoV-2 infection, the interaction with non-structural protein 2 (nsp2) with GIGYF2 enhances GIGYF2 binding to EIF4E2 and increases repression of translation initiation of genes involved in antiviral innate immune response such as IFNB1. In Homo sapiens (Human), this protein is Eukaryotic translation initiation factor 4E type 2.